Here is a 1068-residue protein sequence, read N- to C-terminus: Sucrose-phosphate synthase (1068 aa).

Disordered stretches follow at residues 18-47 (HTSSRGAGGGGGGGDPRSPTKAASPRGAHM) and 118-139 (KEQEQVRREATEDLAEDLSEGE). Residues 23–32 (GAGGGGGGGD) are compositionally biased toward gly residues. The span at 118–128 (KEQEQVRREAT) shows a compositional bias: basic and acidic residues.

It belongs to the glycosyltransferase 1 family. As to quaternary structure, homodimer or homotetramer.

It carries out the reaction beta-D-fructose 6-phosphate + UDP-alpha-D-glucose = sucrose 6(F)-phosphate + UDP + H(+). The protein operates within glycan biosynthesis; sucrose biosynthesis; sucrose from D-fructose 6-phosphate and UDP-alpha-D-glucose: step 1/2. With respect to regulation, activity is regulated by phosphorylation and moderated by concentration of metabolites and light. Plays a role in photosynthetic sucrose synthesis by catalyzing the rate-limiting step of sucrose biosynthesis from UDP-glucose and fructose- 6-phosphate. Involved in the regulation of carbon partitioning in the leaves of plants. May regulate the synthesis of sucrose and therefore play a major role as a limiting factor in the export of photoassimilates out of the leaf. Plays a role for sucrose availability that is essential for plant growth and fiber elongation. This Zea mays (Maize) protein is Sucrose-phosphate synthase.